Consider the following 207-residue polypeptide: Holliday junction branch migration complex subunit RuvA (207 aa).

Residues 1–64 are domain I; that stretch reads MIGLISGQVQ…EDAQLLYGFI (64 aa). The domain II stretch occupies residues 65–143; the sequence is DRKERDVFRQ…NIEVDNSNLE (79 aa). The flexible linker stretch occupies residues 144–152; the sequence is FAIQPAPIS. Residues 153–207 are domain III; the sequence is AEDSIIAEVEGALMSLGYKEKEAQQAIKAAKSNGETFADTQSLLKATLQQFQSFK.

It belongs to the RuvA family. In terms of assembly, homotetramer. Forms an RuvA(8)-RuvB(12)-Holliday junction (HJ) complex. HJ DNA is sandwiched between 2 RuvA tetramers; dsDNA enters through RuvA and exits via RuvB. An RuvB hexamer assembles on each DNA strand where it exits the tetramer. Each RuvB hexamer is contacted by two RuvA subunits (via domain III) on 2 adjacent RuvB subunits; this complex drives branch migration. In the full resolvosome a probable DNA-RuvA(4)-RuvB(12)-RuvC(2) complex forms which resolves the HJ.

The protein resides in the cytoplasm. In terms of biological role, the RuvA-RuvB-RuvC complex processes Holliday junction (HJ) DNA during genetic recombination and DNA repair, while the RuvA-RuvB complex plays an important role in the rescue of blocked DNA replication forks via replication fork reversal (RFR). RuvA specifically binds to HJ cruciform DNA, conferring on it an open structure. The RuvB hexamer acts as an ATP-dependent pump, pulling dsDNA into and through the RuvAB complex. HJ branch migration allows RuvC to scan DNA until it finds its consensus sequence, where it cleaves and resolves the cruciform DNA. The sequence is that of Holliday junction branch migration complex subunit RuvA from Psychrobacter arcticus (strain DSM 17307 / VKM B-2377 / 273-4).